The sequence spans 138 residues: Vesicle transport protein GOT1B (138 aa).

Methionine 1 is subject to N-acetylmethionine. Over 1 to 9 the chain is Cytoplasmic; that stretch reads MISLTDTQK. The chain crosses the membrane as a helical span at residues 10-30; sequence IGMGLTGFGVFFLFFGMILFF. Residues 31-32 are Lumenal-facing; sequence DK. The chain crosses the membrane as a helical span at residues 33–53; sequence ALLAIGNVLFVAGLAFVIGLE. Residues 54 to 68 are Cytoplasmic-facing; that stretch reads RTFRFFFQKHKMKAT. The chain crosses the membrane as a helical span at residues 69–89; sequence GFFLGGVFVVLIGWPLIGMIF. A topological domain (lumenal) is located at residue glutamate 90. Residues 91–109 form a helical membrane-spanning segment; it reads IYGFFLLFRGFFPVVVGFI. Topologically, residues 110 to 138 are cytoplasmic; it reads RRVPVLGSLLNLPGIRSFVDKVGESNNMV.

It belongs to the GOT1 family.

It is found in the golgi apparatus membrane. In terms of biological role, may be involved in fusion of ER-derived transport vesicles with the Golgi complex. This Bos taurus (Bovine) protein is Vesicle transport protein GOT1B.